The chain runs to 403 residues: Renin (403 aa).

An N-terminal signal peptide occupies residues 1 to 22 (MARCRMPRWGLLLVLWGSCTFG). Residues 23 to 65 (LPADTGAFRRIFLKKMPSIRESLKERGVDVAGLGAEWNQFTKR) constitute a propeptide, activation peptide. N-linked (GlcNAc...) asparagine glycosylation occurs at Asn-70. The region spanning 85–400 (YYGEIGIGTP…DRHNNRIGFA (316 aa)) is the Peptidase A1 domain. Residue Asp-103 is part of the active site. Cys-116 and Cys-123 are disulfide-bonded. Residue Asn-140 is glycosylated (N-linked (GlcNAc...) asparagine). An intrachain disulfide couples Cys-279 to Cys-283. Asp-288 is an active-site residue. Cys-322 and Cys-359 are joined by a disulfide.

Belongs to the peptidase A1 family. As to quaternary structure, interacts with ATP6AP2.

The protein resides in the secreted. The protein localises to the membrane. The enzyme catalyses Cleavage of Leu-|-Xaa bond in angiotensinogen to generate angiotensin I.. Its activity is regulated as follows. Interaction with ATP6AP2 results in a 5-fold increased efficiency in angiotensinogen processing. In terms of biological role, renin is a highly specific endopeptidase, whose only known function is to generate angiotensin I from angiotensinogen in the plasma, initiating a cascade of reactions that produce an elevation of blood pressure and increased sodium retention by the kidney. This is Renin (REN) from Canis lupus familiaris (Dog).